The sequence spans 196 residues: HTH-type transcriptional regulator EcpR (196 aa).

The HTH luxR-type domain maps to 138-196 (KDIKKDKITDREMEIIRMTAQGMQPKSIARIENCSVKTVYTHRRNAEAKLYSKIYKLVQ). The segment at residues 162-181 (PKSIARIENCSVKTVYTHRR) is a DNA-binding region (H-T-H motif).

It belongs to the EcpR/MatA family.

It localises to the cytoplasm. In terms of biological role, part of the ecpRABCDE operon, which encodes the E.coli common pilus (ECP). ECP is found in both commensal and pathogenic strains and plays a dual role in early-stage biofilm development and host cell recognition. Positively regulates the expression of the ecp operon. The sequence is that of HTH-type transcriptional regulator EcpR (ecpR) from Escherichia coli O139:H28 (strain E24377A / ETEC).